A 360-amino-acid polypeptide reads, in one-letter code: Peptide chain release factor 1 (360 aa).

Glutamine 235 carries the N5-methylglutamine modification.

Belongs to the prokaryotic/mitochondrial release factor family. Post-translationally, methylated by PrmC. Methylation increases the termination efficiency of RF1.

It is found in the cytoplasm. In terms of biological role, peptide chain release factor 1 directs the termination of translation in response to the peptide chain termination codons UAG and UAA. This is Peptide chain release factor 1 from Burkholderia pseudomallei (strain 1106a).